Consider the following 124-residue polypeptide: Small ribosomal subunit protein uS13 (124 aa).

Residues 94–124 are disordered; the sequence is RGLPVRGQRTKTNARTRKGPKRTIAGKKKAR.

The protein belongs to the universal ribosomal protein uS13 family. In terms of assembly, part of the 30S ribosomal subunit. Forms a loose heterodimer with protein S19. Forms two bridges to the 50S subunit in the 70S ribosome.

Located at the top of the head of the 30S subunit, it contacts several helices of the 16S rRNA. In the 70S ribosome it contacts the 23S rRNA (bridge B1a) and protein L5 of the 50S subunit (bridge B1b), connecting the 2 subunits; these bridges are implicated in subunit movement. Contacts the tRNAs in the A and P-sites. This Mycolicibacterium vanbaalenii (strain DSM 7251 / JCM 13017 / BCRC 16820 / KCTC 9966 / NRRL B-24157 / PYR-1) (Mycobacterium vanbaalenii) protein is Small ribosomal subunit protein uS13.